The following is a 368-amino-acid chain: tRNA/tmRNA (uracil-C(5))-methyltransferase (368 aa).

Gln-192, Tyr-220, Asn-225, Glu-241, and Asp-301 together coordinate S-adenosyl-L-methionine. Cys-326 functions as the Nucleophile in the catalytic mechanism. Glu-360 (proton acceptor) is an active-site residue.

Belongs to the class I-like SAM-binding methyltransferase superfamily. RNA M5U methyltransferase family. TrmA subfamily.

The catalysed reaction is uridine(54) in tRNA + S-adenosyl-L-methionine = 5-methyluridine(54) in tRNA + S-adenosyl-L-homocysteine + H(+). It catalyses the reaction uridine(341) in tmRNA + S-adenosyl-L-methionine = 5-methyluridine(341) in tmRNA + S-adenosyl-L-homocysteine + H(+). Its function is as follows. Dual-specificity methyltransferase that catalyzes the formation of 5-methyluridine at position 54 (m5U54) in all tRNAs, and that of position 341 (m5U341) in tmRNA (transfer-mRNA). The chain is tRNA/tmRNA (uracil-C(5))-methyltransferase from Actinobacillus pleuropneumoniae serotype 3 (strain JL03).